Consider the following 433-residue polypeptide: MQKLMDYFFKRKLKVPRPISNDISVRVKNLYAVYDEKQENQLVALNNISYDFKKNKIYFIIGNSGSGKSTLVTHFNGLMISRYGFVQVGDIVSGDHFDFERQLLGVIDSYDKKIINLLWRNQLDQWTFLVLFSNEVNIQQARILFEANFKQKPISLKFIKTKNNHELITNPYVRENTKIAVVRVDKNVILEINDKMNYEELQRFEFIKKEIKTNYHLSKKIKRFKELRRRVGFVFQFPEYQLFKDTIEKDIMFGPVNLGVKKSEAKKRAKFYLNKLGLGDDYLERSPFGLSGGQKRRVAIAGILAIQNDILVFDEPTAGLDPAGEHEMMQIILDAKANNKTVFVITHTMEHVLEVADEVIVMDEGEIIKTGTPYEIFFDQHIINSTSIQVPRVIAVINELIKKDLKYEILKQKQPRTIEELADAIIEFKKGEK.

One can recognise an ABC transporter domain in the interval 25-389 (VRVKNLYAVY…QHIINSTSIQ (365 aa)). Residue 62 to 69 (GNSGSGKS) participates in ATP binding.

The protein belongs to the ABC transporter superfamily. Energy-coupling factor EcfA family. In terms of assembly, forms a stable energy-coupling factor (ECF) transporter complex composed of 2 membrane-embedded substrate-binding proteins (S component), 2 ATP-binding proteins (A component) and 2 transmembrane proteins (T component).

The protein resides in the cell membrane. In terms of biological role, ATP-binding (A) component of a common energy-coupling factor (ECF) ABC-transporter complex. Unlike classic ABC transporters this ECF transporter provides the energy necessary to transport a number of different substrates. The sequence is that of Energy-coupling factor transporter ATP-binding protein EcfA2 from Ureaplasma parvum serovar 3 (strain ATCC 700970).